The sequence spans 365 residues: Spermine synthase (365 aa).

A2 bears the N-acetylalanine mark. Residue S57 is modified to Phosphoserine. The PABS domain occupies 121 to 361; it reads RYWPTADGRL…ELWVFYTVWK (241 aa). Q147 serves as a coordination point for S-adenosyl 3-(methylsulfanyl)propylamine. The spermidine site is built by Y176 and D200. Residues E219 and 254-255 each bind S-adenosyl 3-(methylsulfanyl)propylamine; that span reads DC. The Proton acceptor role is filled by D275. Y350 and E352 together coordinate spermidine.

Belongs to the spermidine/spermine synthase family. Homodimer. Dimerization is mediated through the N-terminal domain and seems to be required for activity as deletion of the N-terminal domain causes complete loss of activity.

The enzyme catalyses S-adenosyl 3-(methylsulfanyl)propylamine + spermidine = spermine + S-methyl-5'-thioadenosine + H(+). The protein operates within amine and polyamine biosynthesis; spermine biosynthesis; spermine from spermidine: step 1/1. Functionally, catalyzes the production of spermine from spermidine and decarboxylated S-adenosylmethionine (dcSAM). The polypeptide is Spermine synthase (SMS) (Bos taurus (Bovine)).